We begin with the raw amino-acid sequence, 65 residues long: Large ribosomal subunit protein bL35 (65 aa).

The segment at 1–22 (MPKIKTVRGAAKRFKKTGSGGF) is disordered. The span at 10–22 (AAKRFKKTGSGGF) shows a compositional bias: basic residues.

Belongs to the bacterial ribosomal protein bL35 family.

The protein is Large ribosomal subunit protein bL35 of Serratia proteamaculans (strain 568).